Consider the following 57-residue polypeptide: Large ribosomal subunit protein bL32 (57 aa).

A compositionally biased stretch (basic residues) spans 1–19 (MATPKRRMSRANTRSRRSQ). The interval 1–20 (MATPKRRMSRANTRSRRSQW) is disordered.

This sequence belongs to the bacterial ribosomal protein bL32 family.

This chain is Large ribosomal subunit protein bL32, found in Mycobacterium marinum (strain ATCC BAA-535 / M).